The primary structure comprises 144 residues: 3-dehydroquinate dehydratase (144 aa).

The Proton acceptor role is filled by Y23. Residues N74, H80, and D87 each coordinate substrate. H100 (proton donor) is an active-site residue. Residues 101 to 102 (LS) and R111 contribute to the substrate site.

This sequence belongs to the type-II 3-dehydroquinase family. In terms of assembly, homododecamer.

It carries out the reaction 3-dehydroquinate = 3-dehydroshikimate + H2O. The protein operates within metabolic intermediate biosynthesis; chorismate biosynthesis; chorismate from D-erythrose 4-phosphate and phosphoenolpyruvate: step 3/7. Functionally, catalyzes a trans-dehydration via an enolate intermediate. This Hydrogenovibrio crunogenus (strain DSM 25203 / XCL-2) (Thiomicrospira crunogena) protein is 3-dehydroquinate dehydratase.